A 449-amino-acid chain; its full sequence is MLETPKVLLKNLQDCKIHFIGIGGIGISGLAKYLKAQGAKISGSDIAISPSVKYLKALGVEINIPHDPKAINHQDVIIHSAIIKEDNKEIQRAKELKIPILSRKDALYSILKDKRVFSVCGAHGKSSITAMLSAICPFFGAIIGAHSKEFDSNVRESANDSLVFEADESDSSFLFSNPYAAIVPNTEPEHLEHYGHDLERFFFAYEYFLDHAQKRVIYKEDPFLKSYSKDAIVLEKKDIYNIQYILKDGEPYTSFELKDLGAFLVWGLGEHNATNASLAILSALDELNLEEIRNNLLNFKGIKKRFDILQKNALILIDDYAHHPTEISATLKSARIYANLLDTQEQIIVIWQAHKYSRLMDNLEEFKKCFLEHCDRLIILPVYSASEVKRDIDLKTHFKHYNPTFIDRVRKKGDFLELLVNDNVVETIEKGFVIGFGAGDITYQLRGEM.

An ATP-binding site is contributed by G121–S127.

Belongs to the MurCDEF family.

Its subcellular location is the cytoplasm. It catalyses the reaction UDP-N-acetyl-alpha-D-muramate + L-alanine + ATP = UDP-N-acetyl-alpha-D-muramoyl-L-alanine + ADP + phosphate + H(+). It participates in cell wall biogenesis; peptidoglycan biosynthesis. Cell wall formation. The protein is UDP-N-acetylmuramate--L-alanine ligase of Helicobacter pylori (strain HPAG1).